The following is a 238-amino-acid chain: Survival of motor neuron-related-splicing factor 30 (238 aa).

Positions 72 to 132 (SWKVGDKCMA…KPVEEGRKAK (61 aa)) constitute a Tudor domain. A Nuclear localization signal motif is present at residues 142–160 (KKEMIAQQREYKKKKALKK). Ser-201 is subject to Phosphoserine. The residue at position 219 (Lys-219) is an N6-acetyllysine.

The protein belongs to the SMN family. As to quaternary structure, associates with spliceosomes. Associates with U4/U5/U6 tri-snRNP and with U2 snRNP.

The protein resides in the nucleus speckle. It is found in the nucleus. The protein localises to the cajal body. Its function is as follows. Involved in spliceosome assembly. The sequence is that of Survival of motor neuron-related-splicing factor 30 (Smndc1) from Mus musculus (Mouse).